A 91-amino-acid polypeptide reads, in one-letter code: Transcription factor ILI7 (91 aa).

The bHLH domain occupies 4–58 (RSRSRASSAARITDEQIGDLVSKLQALLPEARLRSNDRVPSARVLQETCSYIRSL).

This sequence belongs to the bHLH protein family.

Its function is as follows. Atypical and probable non DNA-binding bHLH transcription factor that integrates multiple signaling pathways to regulate cell elongation and plant development. The protein is Transcription factor ILI7 (ILI7) of Oryza sativa subsp. indica (Rice).